A 503-amino-acid chain; its full sequence is Zinc finger and BTB domain-containing protein 37 (503 aa).

The region spanning 32–96 (CDIVVNVQGQ…CYTGRICLQL (65 aa)) is the BTB domain. Disordered stretches follow at residues 140 to 206 (QTRT…SDVE) and 280 to 344 (GHGS…QVEE). Over residues 144–154 (KHQERPPESHR) the composition is skewed to basic and acidic residues. Residues 155–167 (VTPNLNRSLSPRH) show a composition bias toward polar residues. Basic and acidic residues predominate over residues 319 to 336 (TERHRARSESPGRMDEPK). 3 consecutive C2H2-type zinc fingers follow at residues 373–395 (LTCI…MRLH), 401–423 (FVCR…IRKH), and 429–452 (FHCH…RKNH). The segment at 457–503 (PLEGPHSISPETTVTSRGQAEEESPSQEETVAPGEAVQGSVSTTGPD) is disordered. Over residues 465–474 (SPETTVTSRG) the composition is skewed to polar residues.

The protein resides in the nucleus. Functionally, may be involved in transcriptional regulation. This is Zinc finger and BTB domain-containing protein 37 (ZBTB37) from Homo sapiens (Human).